The primary structure comprises 349 residues: Ureidoglycolate dehydrogenase (NAD(+)) (349 aa).

H116 (proton acceptor) is an active-site residue. Residues S140, 174–176 (DMA), K224, and 306–308 (GQD) contribute to the NAD(+) site.

The protein belongs to the LDH2/MDH2 oxidoreductase family. In terms of assembly, homodimer.

The protein resides in the cytoplasm. It carries out the reaction (S)-ureidoglycolate + NAD(+) = N-carbamoyl-2-oxoglycine + NADH + H(+). It participates in nitrogen metabolism; (S)-allantoin degradation; oxalurate from (S)-ureidoglycolate: step 1/1. AllD plays a pivotal role as a metabolic branch-point enzyme in nitrogen utilization via the assimilation of allantoin. It is able to utilize allantoin as a sole source of nitrogen under anaerobic conditions. Catalyzes the oxidation of ureidoglycolate to oxalurate. The chain is Ureidoglycolate dehydrogenase (NAD(+)) from Escherichia coli (strain K12).